We begin with the raw amino-acid sequence, 1740 residues long: DNA polymerase (1740 aa).

The segment at 472–491 (IEMPHNQEDSDSEKEDEDTD) is disordered. The segment covering 480-491 (DSDSEKEDEDTD) has biased composition (acidic residues). Residues 1189 to 1334 (VWGFFMGDGS…LFYLLKSLGY (146 aa)) enclose the DOD-type homing endonuclease domain. The disordered stretch occupies residues 1673-1701 (PKESGSKTAKKPYQSQKLQKTKSSNKSQI). Polar residues predominate over residues 1685 to 1700 (YQSQKLQKTKSSNKSQ).

This sequence belongs to the DNA polymerase type-B family. In terms of processing, this protein undergoes a protein self splicing that involves a post-translational excision of the intervening region (intein) followed by peptide ligation.

It catalyses the reaction DNA(n) + a 2'-deoxyribonucleoside 5'-triphosphate = DNA(n+1) + diphosphate. In Acanthamoeba polyphaga (Amoeba), this protein is DNA polymerase (POLB).